A 478-amino-acid polypeptide reads, in one-letter code: MTSLPDRGVSSSSSDPLCEGNIAPCSSSSEQKEDCSLKQSKTSILSCVFNSPFNIFEAHQDSSANKSPKSSSGSYDWSRVLRRIVCSGSMWRFLGTSKVLTSSDVWFLGKCYKLSSEESSSDSDSESGHATFLEDFSSRIWITYRRGFDAISDSKYTSDVNWGCMVRSSQMLVAQALIFHHLGRSWRRPLEKPYNPEYIGILHMFGDSEACAFSIHNLLQAGNSYGLAAGSWVGPYAMCRAWQTLVRTNREQHEVVDGNESFPMALYVVSGDEDGERGGAPVVCIDVAAQLCCDFNKGQSTWSPILLLVPLVLGLDKINPRYIPLLKETFTFPQSLGILGGKPGTSTYIAGVQDDRALYLDPHEVQMAVDIAADNIEADTSSYHCSTVRDLALDLIDPSLAIGFYCRDKDDFDDFCSRATELVDKANGAPLFTVVQSVQPSKQMYNQDDVLGISGDGNINVEDLDASGETGEEEWQIL.

A compositionally biased stretch (polar residues) spans 1 to 15 (MTSLPDRGVSSSSSD). Residues 1–31 (MTSLPDRGVSSSSSDPLCEGNIAPCSSSSEQ) are disordered. The active-site Nucleophile is C164. Residues D361 and H363 contribute to the active site.

This sequence belongs to the peptidase C54 family. As to quaternary structure, interacts with ATG8.

It is found in the cytoplasm. It carries out the reaction [protein]-C-terminal L-amino acid-glycyl-phosphatidylethanolamide + H2O = [protein]-C-terminal L-amino acid-glycine + a 1,2-diacyl-sn-glycero-3-phosphoethanolamine. Cysteine protease that plays a key role in autophagy by mediating both proteolytic activation and delipidation of ATG8 family proteins. The protease activity is required for proteolytic activation of ATG8 family proteins: cleaves the C-terminal amino acid of ATG8 proteins to reveal a C-terminal glycine. Exposure of the glycine at the C-terminus is essential for ATG8 proteins conjugation to phosphatidylethanolamine (PE) and insertion to membranes, which is necessary for autophagy. In addition to the protease activity, also mediates delipidation of PE-conjugated ATG8 proteins. In Oryza sativa subsp. japonica (Rice), this protein is Cysteine protease ATG4B (ATG4B).